Here is a 570-residue protein sequence, read N- to C-terminus: Urease subunit alpha (570 aa).

Residues 131-570 enclose the Urease domain; sequence GGMDSHIHFI…LPMAQRYFLF (440 aa). Ni(2+) is bound by residues histidine 136, histidine 138, and lysine 219. Residue lysine 219 is modified to N6-carboxylysine. Histidine 221 lines the substrate pocket. Ni(2+) is bound by residues histidine 248 and histidine 274. Histidine 322 acts as the Proton donor in catalysis. Aspartate 362 is a binding site for Ni(2+).

This sequence belongs to the metallo-dependent hydrolases superfamily. Urease alpha subunit family. As to quaternary structure, heterotrimer of UreA (gamma), UreB (beta) and UreC (alpha) subunits. Three heterotrimers associate to form the active enzyme. Requires Ni cation as cofactor. Post-translationally, carboxylation allows a single lysine to coordinate two nickel ions.

The protein resides in the cytoplasm. The enzyme catalyses urea + 2 H2O + H(+) = hydrogencarbonate + 2 NH4(+). It participates in nitrogen metabolism; urea degradation; CO(2) and NH(3) from urea (urease route): step 1/1. In Allorhizobium ampelinum (strain ATCC BAA-846 / DSM 112012 / S4) (Agrobacterium vitis (strain S4)), this protein is Urease subunit alpha.